The primary structure comprises 944 residues: Translation initiation factor IF-2 (944 aa).

A disordered region spans residues isoleucine 61–isoleucine 281. Positions threonine 132–serine 150 are enriched in polar residues. The segment covering glutamine 151–leucine 169 has biased composition (basic and acidic residues). A compositionally biased stretch (low complexity) spans serine 175–asparagine 185. A compositionally biased stretch (basic and acidic residues) spans alanine 186–histidine 203. The segment covering glutamate 204–isoleucine 215 has biased composition (basic residues). Over residues glutamate 244–lysine 259 the composition is skewed to basic and acidic residues. A tr-type G domain is found at glutamate 443–lysine 612. The segment at glycine 452–threonine 459 is G1. Glycine 452–threonine 459 contacts GTP. The segment at glycine 477–histidine 481 is G2. Positions aspartate 498–glycine 501 are G3. GTP is bound by residues aspartate 498–histidine 502 and asparagine 552–aspartate 555. Residues asparagine 552 to aspartate 555 are G4. The tract at residues serine 588–lysine 590 is G5.

The protein belongs to the TRAFAC class translation factor GTPase superfamily. Classic translation factor GTPase family. IF-2 subfamily.

It is found in the cytoplasm. In terms of biological role, one of the essential components for the initiation of protein synthesis. Protects formylmethionyl-tRNA from spontaneous hydrolysis and promotes its binding to the 30S ribosomal subunits. Also involved in the hydrolysis of GTP during the formation of the 70S ribosomal complex. This Helicobacter pylori (strain HPAG1) protein is Translation initiation factor IF-2.